Consider the following 327-residue polypeptide: Glycerol-3-phosphate dehydrogenase [NAD(P)+] (327 aa).

NADPH contacts are provided by tryptophan 16, arginine 36, and lysine 108. Residues lysine 108, glycine 136, and serine 138 each coordinate sn-glycerol 3-phosphate. Alanine 140 serves as a coordination point for NADPH. The sn-glycerol 3-phosphate site is built by lysine 191, aspartate 244, serine 254, arginine 255, and asparagine 256. Catalysis depends on lysine 191, which acts as the Proton acceptor. Arginine 255 contacts NADPH. NADPH contacts are provided by leucine 274 and glutamate 276.

The protein belongs to the NAD-dependent glycerol-3-phosphate dehydrogenase family.

The protein resides in the cytoplasm. It catalyses the reaction sn-glycerol 3-phosphate + NAD(+) = dihydroxyacetone phosphate + NADH + H(+). It carries out the reaction sn-glycerol 3-phosphate + NADP(+) = dihydroxyacetone phosphate + NADPH + H(+). The protein operates within membrane lipid metabolism; glycerophospholipid metabolism. Its function is as follows. Catalyzes the reduction of the glycolytic intermediate dihydroxyacetone phosphate (DHAP) to sn-glycerol 3-phosphate (G3P), the key precursor for phospholipid synthesis. In Bradyrhizobium sp. (strain ORS 278), this protein is Glycerol-3-phosphate dehydrogenase [NAD(P)+].